Consider the following 118-residue polypeptide: Large ribosomal subunit protein uL18 (118 aa).

It belongs to the universal ribosomal protein uL18 family. In terms of assembly, part of the 50S ribosomal subunit; part of the 5S rRNA/L5/L18/L25 subcomplex. Contacts the 5S and 23S rRNAs.

In terms of biological role, this is one of the proteins that bind and probably mediate the attachment of the 5S RNA into the large ribosomal subunit, where it forms part of the central protuberance. The sequence is that of Large ribosomal subunit protein uL18 from Levilactobacillus brevis (strain ATCC 367 / BCRC 12310 / CIP 105137 / JCM 1170 / LMG 11437 / NCIMB 947 / NCTC 947) (Lactobacillus brevis).